The chain runs to 301 residues: Probable 5-dehydro-4-deoxyglucarate dehydratase (301 aa).

This sequence belongs to the DapA family.

It catalyses the reaction 5-dehydro-4-deoxy-D-glucarate + H(+) = 2,5-dioxopentanoate + CO2 + H2O. The protein operates within carbohydrate acid metabolism; D-glucarate degradation; 2,5-dioxopentanoate from D-glucarate: step 2/2. This Cereibacter sphaeroides (strain ATCC 17029 / ATH 2.4.9) (Rhodobacter sphaeroides) protein is Probable 5-dehydro-4-deoxyglucarate dehydratase.